A 396-amino-acid polypeptide reads, in one-letter code: Septu protein PtuA (396 aa).

Its function is as follows. Component of antiviral defense system Septu type I, composed of PtuA and PtuB. Expression of Septu type I in B.subtilis (strain BEST7003) confers resistance to phages SBSphiC and SBSphiJ. May be an ATPase. This is Septu protein PtuA from Bacillus thuringiensis.